The following is a 453-amino-acid chain: UDP-N-acetylmuramoylalanine--D-glutamate ligase (453 aa).

Glycine 117–threonine 123 contributes to the ATP binding site.

Belongs to the MurCDEF family.

The protein resides in the cytoplasm. The catalysed reaction is UDP-N-acetyl-alpha-D-muramoyl-L-alanine + D-glutamate + ATP = UDP-N-acetyl-alpha-D-muramoyl-L-alanyl-D-glutamate + ADP + phosphate + H(+). The protein operates within cell wall biogenesis; peptidoglycan biosynthesis. In terms of biological role, cell wall formation. Catalyzes the addition of glutamate to the nucleotide precursor UDP-N-acetylmuramoyl-L-alanine (UMA). The polypeptide is UDP-N-acetylmuramoylalanine--D-glutamate ligase (Caldicellulosiruptor saccharolyticus (strain ATCC 43494 / DSM 8903 / Tp8T 6331)).